The primary structure comprises 437 residues: Tol-Pal system protein TolB (437 aa).

The N-terminal stretch at 1-23 (MQKRHPIIYLLITLLIFVPVSYG) is a signal peptide.

This sequence belongs to the TolB family. The Tol-Pal system is composed of five core proteins: the inner membrane proteins TolA, TolQ and TolR, the periplasmic protein TolB and the outer membrane protein Pal. They form a network linking the inner and outer membranes and the peptidoglycan layer.

The protein resides in the periplasm. Its function is as follows. Part of the Tol-Pal system, which plays a role in outer membrane invagination during cell division and is important for maintaining outer membrane integrity. This is Tol-Pal system protein TolB from Coxiella burnetii (strain RSA 493 / Nine Mile phase I).